The following is a 245-amino-acid chain: rRNA adenine N-6-methyltransferase (245 aa).

S-adenosyl-L-methionine is bound by residues asparagine 10, leucine 12, glycine 37, glutamate 58, aspartate 83, and asparagine 100.

This sequence belongs to the class I-like SAM-binding methyltransferase superfamily. rRNA adenine N(6)-methyltransferase family.

It catalyses the reaction adenosine(2085) in 23S rRNA + 2 S-adenosyl-L-methionine = N(6)-dimethyladenosine(2085) in 23S rRNA + 2 S-adenosyl-L-homocysteine + 2 H(+). Its function is as follows. This protein produces a dimethylation of the adenine residue at position 2085 in 23S rRNA, resulting in reduced affinity between ribosomes and macrolide-lincosamide-streptogramin B antibiotics. The polypeptide is rRNA adenine N-6-methyltransferase (ermBC) (Escherichia coli).